The primary structure comprises 525 residues: Rho guanine nucleotide exchange factor gef3 (525 aa).

The 197-residue stretch at 72–268 (AIISVLEEFR…EIASQRMNEL (197 aa)) folds into the DH domain.

It is found in the cytoplasm. Its function is as follows. Has a role in the control of cell polarity and cytokinesis. Involved in bipolar growth and septum formation. The chain is Rho guanine nucleotide exchange factor gef3 (gef3) from Schizosaccharomyces pombe (strain 972 / ATCC 24843) (Fission yeast).